Here is a 166-residue protein sequence, read N- to C-terminus: Large ribosomal subunit protein uL10 (166 aa).

It belongs to the universal ribosomal protein uL10 family. Part of the ribosomal stalk of the 50S ribosomal subunit. The N-terminus interacts with L11 and the large rRNA to form the base of the stalk. The C-terminus forms an elongated spine to which L12 dimers bind in a sequential fashion forming a multimeric L10(L12)X complex.

Its function is as follows. Forms part of the ribosomal stalk, playing a central role in the interaction of the ribosome with GTP-bound translation factors. The protein is Large ribosomal subunit protein uL10 of Pseudomonas fluorescens (strain Pf0-1).